Here is a 196-residue protein sequence, read N- to C-terminus: Putative 3-methyladenine DNA glycosylase (196 aa).

It belongs to the DNA glycosylase MPG family.

The polypeptide is Putative 3-methyladenine DNA glycosylase (Bacillus licheniformis (strain ATCC 14580 / DSM 13 / JCM 2505 / CCUG 7422 / NBRC 12200 / NCIMB 9375 / NCTC 10341 / NRRL NRS-1264 / Gibson 46)).